The sequence spans 497 residues: Glycerol kinase (497 aa).

ADP is bound at residue Thr12. ATP-binding residues include Thr12, Thr13, and Ser14. Thr12 is a binding site for sn-glycerol 3-phosphate. Arg16 is a binding site for ADP. Positions 82, 83, 134, and 243 each coordinate sn-glycerol 3-phosphate. Glycerol-binding residues include Arg82, Glu83, Tyr134, Asp243, and Gln244. Positions 265 and 308 each coordinate ADP. Residues Thr265, Gly308, Gln312, and Gly409 each coordinate ATP. Positions 409 and 413 each coordinate ADP.

This sequence belongs to the FGGY kinase family.

It carries out the reaction glycerol + ATP = sn-glycerol 3-phosphate + ADP + H(+). Its pathway is polyol metabolism; glycerol degradation via glycerol kinase pathway; sn-glycerol 3-phosphate from glycerol: step 1/1. With respect to regulation, inhibited by fructose 1,6-bisphosphate (FBP). In terms of biological role, key enzyme in the regulation of glycerol uptake and metabolism. Catalyzes the phosphorylation of glycerol to yield sn-glycerol 3-phosphate. The protein is Glycerol kinase of Solidesulfovibrio magneticus (strain ATCC 700980 / DSM 13731 / RS-1) (Desulfovibrio magneticus).